Consider the following 412-residue polypeptide: ATP phosphoribosyltransferase regulatory subunit (412 aa).

This sequence belongs to the class-II aminoacyl-tRNA synthetase family. HisZ subfamily. In terms of assembly, heteromultimer composed of HisG and HisZ subunits.

The protein resides in the cytoplasm. Its pathway is amino-acid biosynthesis; L-histidine biosynthesis; L-histidine from 5-phospho-alpha-D-ribose 1-diphosphate: step 1/9. Its function is as follows. Required for the first step of histidine biosynthesis. May allow the feedback regulation of ATP phosphoribosyltransferase activity by histidine. In Dehalococcoides mccartyi (strain CBDB1), this protein is ATP phosphoribosyltransferase regulatory subunit.